Reading from the N-terminus, the 63-residue chain is uncharacterized protein (63 aa).

A run of 2 helical transmembrane segments spans residues valine 3–isoleucine 23 and alanine 42–leucine 62.

The protein resides in the cell membrane. This is an uncharacterized protein from Bacillus subtilis (strain 168).